We begin with the raw amino-acid sequence, 1040 residues long: MQVLPPSSTGGPSRLFIMRPVATTLLMVAILLAGIIGYRALPVSALPEVDYPTIQVVTLYPGASPDVMTSAVTAPLERQFGQMSGLKQMSSQSSGGASVITLQFQLTLPLDVAEQEVQAAINAATNLLPSDLPNPPVYSKVNPADPPIMTLAVTSTAMPMTQVEDMVETRVAQKISQISGVGLVTLSGGQRPAVRVKLNAQAIAALGLTSETVRTAITGANVNSAKGSLDGPSRAVTLSANDQMQSAEEYRQLIIAYQNGAPIRLGDVATVEQGAENSWLGAWANKEQAIVMNVQRQPGANIISTADSIRQMLPQLTESLPKSVKVTVLSDRTTNIRASVNDTQFELMMAIALVVMIIYLFLRNIPATIIPGVAVPLSLIGTFAVMVFLDFSINNLTLMALTIATGFVVDDAIVVIENISRYIEKGEKPLAAALKGAGEIGFTIISLTFSLIAVLIPLLFMGDIVGRLFREFAITLAVAILISAVVSLTLTPMMCARMLSQESLRKQNRFSRASEKMFERIIAAYGRGLAKVLNHPWLTLSVALSTLLLSVLLWVFIPKGFFPVQDNGIIQGTLQAPQSSSFTNMAQRQRQVADVILQDPAVQSLTSFVGVDGTNPSLNSARLQINLKPLDERDDRVQKVIARLQTAVDKVPGVDLFLQPTQDLTIDTQVSRTQYQFTLQATSLDALSTWVPQLMEKLQQLPQLSDVSSDWQDKGLVAYVNVDRDSASRLGINMADVDNALYNAFGQRLISTIYTQANQYRVVLEHNTENTPGLAALDTIRLTSSDGGVVPLSSIAKIEQRFAPLSINHLDQFPVTTISFNVPDNYSLGDAVQAIMDTEKTLNLPVDITTQFQGSTLAFQSALGSTVWLIVAAVVAMYIVLGILYESFIHPITILSTLPTAGVGALLALLIAGSELDVIAIIGIILLIGIVKKNAIMMIDFALAAEREQGMSPRDAIYQACLLRFRPILMTTLAALLGALPLMLSTGVGAELRRPLGIGMVGGLIVSQVLTLFTTPVIYLLFDRLALWTKSRFARHEEEA.

The next 12 helical transmembrane spans lie at 16–36, 347–367, 369–389, 396–416, 440–460, 472–492, 537–557, 863–883, 888–908, 911–931, 968–988, and 998–1018; these read FIMR…AGII, LMMA…NIPA, IIPG…MVFL, LTLM…IVVI, IGFT…PLLF, FAIT…TLTP, WLTL…WVFI, LGST…VLGI, FIHP…ALLA, IAGS…IGIV, ILMT…STGV, and IGMV…TPVI.

It belongs to the resistance-nodulation-cell division (RND) (TC 2.A.6) family. MdtB subfamily. In terms of assembly, part of a tripartite efflux system composed of MdtA, MdtB and MdtC. MdtB forms a heteromultimer with MdtC.

Its subcellular location is the cell inner membrane. Its function is as follows. The MdtABC tripartite complex confers resistance against novobiocin and deoxycholate. The chain is Multidrug resistance protein MdtB from Escherichia coli O17:K52:H18 (strain UMN026 / ExPEC).